The sequence spans 83 residues: Kappa-theraphotoxin-Cg2b (83 aa).

The N-terminal stretch at 1-21 (MKGSAFAIILGLVVLCACSFA) is a signal peptide. A propeptide spanning residues 22–53 (EDEQDQFASPNELLRSMFLESRHELIPEVEGR) is cleaved from the precursor. Intrachain disulfides connect Cys55-Cys69, Cys62-Cys74, and Cys68-Cys78.

This sequence belongs to the neurotoxin 30 (phrixotoxin) family. In terms of tissue distribution, expressed by the venom gland.

It is found in the secreted. Probable ion channel inhibitor. This Chilobrachys guangxiensis (Chinese earth tiger tarantula) protein is Kappa-theraphotoxin-Cg2b.